The chain runs to 280 residues: ATP synthase subunit a (280 aa).

A run of 7 helical transmembrane segments spans residues 45–65 (AINVDSMLFSIGLGVLFLFLF), 105–125 (LVAPLALTVFMWVFLMNLMDL), 126–146 (LPVDWLPYVATMAGIPYLKVV), 159–179 (LSIFFLVLYYSVKMKGAGGFF), 190–210 (FLFPVNLLLEGVGLIAKPISL), 223–243 (MIFILIALMFGGGWVLALFGG), and 250–270 (AVFHILIITLQAFIFMTLTIV).

The protein belongs to the ATPase A chain family. In terms of assembly, F-type ATPases have 2 components, CF(1) - the catalytic core - and CF(0) - the membrane proton channel. CF(1) has five subunits: alpha(3), beta(3), gamma(1), delta(1), epsilon(1). CF(0) has three main subunits: a(1), b(2) and c(9-12). The alpha and beta chains form an alternating ring which encloses part of the gamma chain. CF(1) is attached to CF(0) by a central stalk formed by the gamma and epsilon chains, while a peripheral stalk is formed by the delta and b chains.

The protein localises to the cell inner membrane. Functionally, key component of the proton channel; it plays a direct role in the translocation of protons across the membrane. This is ATP synthase subunit a from Thiobacillus denitrificans (strain ATCC 25259 / T1).